The primary structure comprises 396 residues: Elongation factor Tu (396 aa).

Positions 10–206 (KPHVNIGTIG…AVDAYIPEPE (197 aa)) constitute a tr-type G domain. A G1 region spans residues 19-26 (GHVDHGKT). 19 to 26 (GHVDHGKT) serves as a coordination point for GTP. Thr-26 provides a ligand contact to Mg(2+). The tract at residues 60-64 (GITIS) is G2. Positions 81–84 (DCPG) are G3. GTP contacts are provided by residues 81 to 85 (DCPGH) and 136 to 139 (NKVD). The G4 stretch occupies residues 136-139 (NKVD). The tract at residues 174–176 (SAL) is G5.

This sequence belongs to the TRAFAC class translation factor GTPase superfamily. Classic translation factor GTPase family. EF-Tu/EF-1A subfamily. In terms of assembly, monomer.

The protein resides in the cytoplasm. It carries out the reaction GTP + H2O = GDP + phosphate + H(+). GTP hydrolase that promotes the GTP-dependent binding of aminoacyl-tRNA to the A-site of ribosomes during protein biosynthesis. The polypeptide is Elongation factor Tu (Magnetococcus marinus (strain ATCC BAA-1437 / JCM 17883 / MC-1)).